A 149-amino-acid polypeptide reads, in one-letter code: Large ribosomal subunit protein bL9 (149 aa).

It belongs to the bacterial ribosomal protein bL9 family.

Binds to the 23S rRNA. The protein is Large ribosomal subunit protein bL9 of Helicobacter acinonychis (strain Sheeba).